Consider the following 171-residue polypeptide: S-ribosylhomocysteine lyase (171 aa).

The Fe cation site is built by His-54, His-58, and Cys-128.

It belongs to the LuxS family. As to quaternary structure, homodimer. Fe cation is required as a cofactor.

The catalysed reaction is S-(5-deoxy-D-ribos-5-yl)-L-homocysteine = (S)-4,5-dihydroxypentane-2,3-dione + L-homocysteine. Its function is as follows. Involved in the synthesis of autoinducer 2 (AI-2) which is secreted by bacteria and is used to communicate both the cell density and the metabolic potential of the environment. The regulation of gene expression in response to changes in cell density is called quorum sensing. Catalyzes the transformation of S-ribosylhomocysteine (RHC) to homocysteine (HC) and 4,5-dihydroxy-2,3-pentadione (DPD). In Photorhabdus laumondii subsp. laumondii (strain DSM 15139 / CIP 105565 / TT01) (Photorhabdus luminescens subsp. laumondii), this protein is S-ribosylhomocysteine lyase.